A 768-amino-acid chain; its full sequence is MSNLSKGTGSRKDTKMRIRAFPMTMDEKYVNSIWDLLKNAIQEIQRKNNSGLSFEELYRNAYTMVLHKHGEKLYTGLREVVTEHLINKVREDVLNSLNNNFLQTLNQAWNDHQTAMVMIRDILMYMDRVYVQQNNVENVYNLGLIIFRDQVVRYGCIRDHLRQTLLDMIARERKGEVVDRGAIRNACQMLMILGLEGRSVYEEDFEAPFLEMSAEFFQMESQKFLAENSASVYIKKVEARINEEIERVMHCLDKSTEEPIVKVVERELISKHMKTIVEMENSGLVHMLKNGKTEDLACMYKLFSRVPNGLKTMCECMSSYLREQGKALVSEEGEGKNPVDYIQGLLDLKSRFDRFLQESFNNDRLFKQTIAGDFEYFLNLNSRSPEYLSLFIDDKLKKGVKGLTEQEVETILDKAMVLFRFMQEKDVFERYYKQHLARRLLTNKSVSDDSEKNMISKLKTECGCQFTSKLEGMFRDMSISNTTMDEFRQHLQATGVSLGGVDLTVRVLTTGYWPTQSATPKCNIPPAPRHAFEIFRRFYLAKHSGRQLTLQHHMGSADLNATFYGPVKKEDGSEVGVGGAQVTGSNTRKHILQVSTFQMTILMLFNNREKYTFEEIQQETDIPERELVRALQSLACGKPTQRVLTKEPKSKEIESGHIFTVNDQFTSKLHRVKIQTVAAKQGESDPERKETRQKVDDDRKHEIEAAIVRIMKSRKKMQHNVLVAEVTQQLKARFLPSPVVIKKRIEGLIEREYLARTPEDRKVYTYVA.

Serine 2 bears the N-acetylserine mark. Residues 2–41 (SNLSKGTGSRKDTKMRIRAFPMTMDEKYVNSIWDLLKNAI) form an interaction with KLHL18 region. The residue at position 585 (serine 585) is a Phosphoserine. A disordered region spans residues 677–698 (VAAKQGESDPERKETRQKVDDD). Positions 682–698 (GESDPERKETRQKVDDD) are enriched in basic and acidic residues. The region spanning 698–760 (DRKHEIEAAI…REYLARTPED (63 aa)) is the Cullin neddylation domain. A Glycyl lysine isopeptide (Lys-Gly) (interchain with G-Cter in NEDD8) cross-link involves residue lysine 712.

Belongs to the cullin family. Forms neddylation-dependent homodimers. Component of multiple BCR (BTB-CUL3-RBX1) E3 ubiquitin-protein ligase complexes formed of CUL3, RBX1 and a variable BTB domain-containing protein acting as both, adapter to cullin and substrate recognition subunit. The BCR complex may be active as a heterodimeric complex, in which NEDD8, covalently attached to one CUL3 molecule, binds to the C-terminus of a second CUL3 molecule. Interacts with RBX1, RNF7, CYCE and TIP120A/CAND1. Part of the BCR(SPOP) containing SPOP, and of BCR containing homodimeric SPOPL or the heterodimer formed by SPOP and SPOPL. Part of the probable BCR(KLHL9-KLHL13) complex with BTB domain proteins KLHL9 and KLHL13. Part of the BCR(KLHL41) complex containing KLHL41. Component of the BCR(KLHL12) E3 ubiquitin ligase complex, at least composed of CUL3 and KLHL12 and RBX1. Component of the BCR(KLHL3) E3 ubiquitin ligase complex, at least composed of CUL3 and KLHL3 and RBX1. Part of the BCR(ENC1) complex containing ENC1. Part of a complex consisting of BMI1/PCGF4, CUL3 and SPOP. Part of a complex consisting of BRMS1, CUL3 and SPOP. Component of the BCR(KLHL21) E3 ubiquitin ligase complex, at least composed of CUL3, KLHL21 and RBX1. Component of the BCR(KLHL22) E3 ubiquitin ligase complex, at least composed of CUL3, KLHL22 and RBX1. Component of the BCR(KLHL25) E3 ubiquitin ligase complex, at least composed of CUL3, KLHL25 and RBX1. Part of a complex consisting of MACROH2A1, CUL3 and SPOP. Component of the BCR(KLHL42) E3 ubiquitin ligase complex, at least composed of CUL3 and KLHL42. Component of the BCR(KBTBD8) E3 ubiquitin ligase complex, at least composed of CUL3, KBTBD8 and RBX1. Interacts with KLHL42 (via the BTB domain). Interacts with KATNA1; the interaction is enhanced by KLHL42. Interacts with KCTD5, KLHL9, KLHL11, KLHL13, GAN, ZBTB16, KLHL3, KLHL15, KLHL20, KLHL36, GMCL2, BTBD1. Part of a complex that contains CUL3, RBX1 and GAN. Interacts (via BTB domain) with KLHL17; the interaction regulates surface GRIK2 expression. Interacts with KCTD7. Part of the BCR(GAN) complex containing GAN. Part of the BCR(KEAP1) complex containing KEAP1. vInteracts with KLHL10. Interacts with KAT5 and ATF2. Interacts with KCTD17 in the BCR(KCTD17) E3 ubiquitin ligase complex, at least composed of CUL3, KCTD17 and RBX1. Interacts (when neddylated) with ARIH1; leading to activate the E3 ligase activity of ARIH1. Interacts with COPS9. Interacts with PPP2R5B; this interaction is indirect and mediated through KLHL15-binding and leads to PPP2R5B proteasomal degradation. Interacts with RBBP8/CtIP; this interaction is indirect and mediated through KLHL15-binding and leads to RBBP8 proteasomal degradation. Interacts with KLHL24 in the BCR(KLHL24) E3 ubiquitin ligase complex, composed of CUL3, RBX1 and KLHL24. Interacts with RHOBTB2. Interacts (via BTB domain) with KLHL17; the interaction regulates surface GRIK2 expression. Interacts with AURKA and KLHL18 (via BTB domain). Interacts (unneddylated form) with DCUN1D1, DCUN1D2, DCUN1D3, DCUN1D4 and DCUN1D5; these interactions promote the cullin neddylation. Component of a BCR3 (BTB-CUL3-RBX1) E3 ubiquitin ligase complex, also named Cul3-RING ubiquitin ligase complex CUL3(KBTBD6/7), composed of CUL3, RBX1, KBTBD6 and KBTBD7. Component of the BCR(KBTBD2) E3 ubiquitin ligase complex, at least composed of CUL3, KBTBD2 and RBX1. Interacts with KBTBD2 (via the BTB domain). Component of the BCR(KBTBD4) E3 ubiquitin ligase complex, at least composed of CUL3, KBTBD4 and RBX1. Post-translationally, neddylated. Attachment of NEDD8 is required for the E3 ubiquitin-protein ligase activity of the BCR complex. Deneddylated via its interaction with the COP9 signalosome (CSN) complex.

The protein localises to the nucleus. The protein resides in the golgi apparatus. It localises to the cell projection. It is found in the cilium. Its subcellular location is the flagellum. The protein localises to the cytoplasm. The protein resides in the cytoskeleton. It localises to the spindle. It is found in the microtubule organizing center. Its subcellular location is the centrosome. The protein localises to the spindle pole. The protein operates within protein modification; protein ubiquitination. Functionally, core component of multiple cullin-RING-based BCR (BTB-CUL3-RBX1) E3 ubiquitin-protein ligase complexes which mediate the ubiquitination and subsequent proteasomal degradation of target proteins. BCR complexes and ARIH1 collaborate in tandem to mediate ubiquitination of target proteins. As a scaffold protein may contribute to catalysis through positioning of the substrate and the ubiquitin-conjugating enzyme. The E3 ubiquitin-protein ligase activity of the complex is dependent on the neddylation of the cullin subunit and is inhibited by the association of the deneddylated cullin subunit with TIP120A/CAND1. The functional specificity of the BCR complex depends on the BTB domain-containing protein as the substrate recognition component. BCR(KLHL42) is involved in ubiquitination of KATNA1. BCR(SPOP) is involved in ubiquitination of BMI1/PCGF4, BRMS1, MACROH2A1 and DAXX, GLI2 and GLI3. Can also form a cullin-RING-based BCR (BTB-CUL3-RBX1) E3 ubiquitin-protein ligase complex containing homodimeric SPOPL or the heterodimer formed by SPOP and SPOPL; these complexes have lower ubiquitin ligase activity. BCR(KLHL9-KLHL13) controls the dynamic behavior of AURKB on mitotic chromosomes and thereby coordinates faithful mitotic progression and completion of cytokinesis. BCR(KLHL12) is involved in ER-Golgi transport by regulating the size of COPII coats, thereby playing a key role in collagen export, which is required for embryonic stem (ES) cells division: BCR(KLHL12) acts by mediating monoubiquitination of SEC31 (SEC31A or SEC31B). BCR(KLHL3) acts as a regulator of ion transport in the distal nephron; by mediating ubiquitination of WNK4. The BCR(KLHL20) E3 ubiquitin ligase complex is involved in interferon response and anterograde Golgi to endosome transport: it mediates both ubiquitination leading to degradation and 'Lys-33'-linked ubiquitination. The BCR(KLHL21) E3 ubiquitin ligase complex regulates localization of the chromosomal passenger complex (CPC) from chromosomes to the spindle midzone in anaphase and mediates the ubiquitination of AURKB. The BCR(KLHL22) ubiquitin ligase complex mediates monoubiquitination of PLK1, leading to PLK1 dissociation from phosphoreceptor proteins and subsequent removal from kinetochores, allowing silencing of the spindle assembly checkpoint (SAC) and chromosome segregation. The BCR(KLHL22) ubiquitin ligase complex is also responsible for the amino acid-stimulated 'Lys-48' polyubiquitination and proteasomal degradation of DEPDC5. Through the degradation of DEPDC5, releases the GATOR1 complex-mediated inhibition of the TORC1 pathway. The BCR(KLHL25) ubiquitin ligase complex is involved in translational homeostasis by mediating ubiquitination and subsequent degradation of hypophosphorylated EIF4EBP1 (4E-BP1). The BCR(KLHL25) ubiquitin ligase complex is also involved in lipid synthesis by mediating ubiquitination and degradation of ACLY. The BCR(KBTBD8) complex acts by mediating monoubiquitination of NOLC1 and TCOF1, leading to remodel the translational program of differentiating cells in favor of neural crest specification. Involved in ubiquitination of cyclin E and of cyclin D1 (in vitro) thus involved in regulation of G1/S transition. Involved in the ubiquitination of KEAP1, ENC1 and KLHL41. In concert with ATF2 and RBX1, promotes degradation of KAT5 thereby attenuating its ability to acetylate and activate ATM. The BCR(KCTD17) E3 ubiquitin ligase complex mediates ubiquitination and degradation of TCHP, a down-regulator of cilium assembly, thereby inducing ciliogenesis. The BCR(KLHL24) E3 ubiquitin ligase complex mediates ubiquitination of KRT14, controls KRT14 levels during keratinocytes differentiation, and is essential for skin integrity. The BCR(KLHL18) E3 ubiquitin ligase complex mediates the ubiquitination of AURKA leading to its activation at the centrosome which is required for initiating mitotic entry. The BCR(KEAP1) E3 ubiquitin ligase complex acts as a key sensor of oxidative and electrophilic stress by mediating ubiquitination and degradation of NFE2L2/NRF2, a transcription factor regulating expression of many cytoprotective genes. As part of the CUL3(KBTBD6/7) E3 ubiquitin ligase complex functions mediates 'Lys-48' ubiquitination and proteasomal degradation of TIAM1. By controlling the ubiquitination of that RAC1 guanine exchange factors (GEF), regulates RAC1 signal transduction and downstream biological processes including the organization of the cytoskeleton, cell migration and cell proliferation. The BCR(KBTBD4) E3 ubiquitin ligase complex targets CoREST corepressor complex components RCOR1, KDM1A/LSD1 and HDAC2 for proteasomal degradation with RCOR1 likely to be the primary target while degradation of KDM1A and HDAC2 is likely due to their association with RCOR1. It also targets RCOR3, MIER2 and MIER3 for proteasomal degradation as well as associated proteins ZNF217 and RREB1 with degradation being dependent on the presence of an ELM2 domain in the target proteins. The BCR(ARMC5) complex mediates premature transcription termination of transcripts that are unfavorably configured for transcriptional elongation by mediating ubiquitination of Pol II subunit POLR2A. Required for 'Lys-63'-linked ubiquitination of large ribosomal subunit protein MRPL12. This is Cullin-3 (Cul3) from Rattus norvegicus (Rat).